We begin with the raw amino-acid sequence, 503 residues long: 60S ribosomal export protein NMD3 (503 aa).

Methionine 1 is subject to N-acetylmethionine. Serine 258 carries the phosphoserine modification. A Nuclear and nucleolar localization signal motif is present at residues 405 to 422 (KKSYDRTKRQRRRNWKLK). The tract at residues 425 to 503 (ARERENMDTD…TGEEGASMLT (79 aa)) is necessary for the nuclear export of the 60S ribosomal subunit. Threonine 433 is modified (phosphothreonine). Position 468 is a phosphoserine (serine 468). Phosphothreonine is present on threonine 470. The Nuclear export signal signature appears at 480-489 (LAEMLEDLHI).

It belongs to the NMD3 family. As to quaternary structure, found in a 60S ribosomal subunit export complex with RAN and XPO1. Interacts with XPO1. Associates with pre-60S ribosomal particles.

Its subcellular location is the cytoplasm. The protein resides in the nucleus. Acts as an adapter for the XPO1/CRM1-mediated export of the 60S ribosomal subunit. The polypeptide is 60S ribosomal export protein NMD3 (NMD3) (Homo sapiens (Human)).